The following is a 214-amino-acid chain: GTP-binding nuclear protein GSP1 (214 aa).

In terms of domain architecture, Small GTPase Ran-type spans 4 to 172; it reads RELTYKICLI…LHLARIFTGR (169 aa). 17 to 22 contributes to the GTP binding site; the sequence is GVGKTT. A switch-I region spans residues 34–42; the sequence is KNYNATVGA. Residues Gly-66, 121-124, and 151-153 contribute to the GTP site; these read NKID and SAK. Residues 66-82 form a switch-II region; sequence GQEKKAVLKDVYYIGAS.

This sequence belongs to the small GTPase superfamily. Ran family. Found in a nuclear export complex with RanGTP, exportin and pre-miRNA.

The protein localises to the nucleus. GTP-binding protein involved in nucleocytoplasmic transport. Required for the import of protein into the nucleus and also for RNA export. The chain is GTP-binding nuclear protein GSP1 (GSP1) from Encephalitozoon cuniculi (strain GB-M1) (Microsporidian parasite).